Consider the following 345-residue polypeptide: Biotin synthase (345 aa).

One can recognise a Radical SAM core domain in the interval 38–256; sequence RQVQVSTLLS…IAVARIMMPA (219 aa). [4Fe-4S] cluster contacts are provided by cysteine 53, cysteine 57, and cysteine 60. Residues cysteine 97, cysteine 128, cysteine 188, and arginine 260 each coordinate [2Fe-2S] cluster.

It belongs to the radical SAM superfamily. Biotin synthase family. Homodimer. The cofactor is [4Fe-4S] cluster. Requires [2Fe-2S] cluster as cofactor.

The enzyme catalyses (4R,5S)-dethiobiotin + (sulfur carrier)-SH + 2 reduced [2Fe-2S]-[ferredoxin] + 2 S-adenosyl-L-methionine = (sulfur carrier)-H + biotin + 2 5'-deoxyadenosine + 2 L-methionine + 2 oxidized [2Fe-2S]-[ferredoxin]. It participates in cofactor biosynthesis; biotin biosynthesis; biotin from 7,8-diaminononanoate: step 2/2. Its function is as follows. Catalyzes the conversion of dethiobiotin (DTB) to biotin by the insertion of a sulfur atom into dethiobiotin via a radical-based mechanism. In Serratia proteamaculans (strain 568), this protein is Biotin synthase.